The sequence spans 603 residues: Geraniol synthase Tps-5031G8, chloroplastic (603 aa).

A chloroplast-targeting transit peptide spans 1–35; it reads MCSISQKVVIGLNKAAANNCLQNLDRRGFKTRRVS. 5 residues coordinate (2E)-geranyl diphosphate: Arg-319, Asp-356, Asp-360, Arg-497, and Asp-500. 2 residues coordinate Mg(2+): Asp-356 and Asp-360. The DDXXD motif motif lies at 356 to 360; the sequence is DDVYD. Mg(2+) is bound by residues Asp-500, Thr-504, and Glu-508.

Belongs to the terpene synthase family. Tpsb subfamily. Monomer. It depends on Mg(2+) as a cofactor. Mn(2+) is required as a cofactor.

The protein localises to the plastid. The protein resides in the chloroplast. The catalysed reaction is (2E)-geranyl diphosphate + H2O = (2E)-geraniol + diphosphate. It participates in secondary metabolite biosynthesis; terpenoid biosynthesis. In terms of biological role, monoterpene synthase (mono-TPS) involved in the biosynthesis of monoterpenes natural products. Catalyzes the conversion of (2E)-geranyl diphosphate (GPP) into geraniol. The protein is Geraniol synthase Tps-5031G8, chloroplastic of Perilla frutescens var. hirtella (Perilla citriodora).